Here is a 282-residue protein sequence, read N- to C-terminus: D-arabinitol 2-dehydrogenase [ribulose-forming] (282 aa).

Leucine 32 and asparagine 53 together coordinate NADP(+). The active-site Proton donor is the serine 170. NADP(+) contacts are provided by tyrosine 185, lysine 189, isoleucine 218, and threonine 220. Catalysis depends on tyrosine 185, which acts as the Proton acceptor. The Lowers pKa of active site Tyr role is filled by lysine 189.

This sequence belongs to the short-chain dehydrogenases/reductases (SDR) family.

It carries out the reaction D-arabinitol + NAD(+) = D-ribulose + NADH + H(+). The protein operates within carbohydrate metabolism; D-arabinitol metabolism. Functionally, catalyzes the NAD(+)-dependent oxidation of D-arabinitol at carbon 4 to produce D-ribulose. In Candida tropicalis (Yeast), this protein is D-arabinitol 2-dehydrogenase [ribulose-forming] (ARD).